Here is a 178-residue protein sequence, read N- to C-terminus: uncharacterized protein (178 aa).

The chain crosses the membrane as a helical span at residues 7–29; that stretch reads FFVIFSILWGSLFLFSIIGSLGT.

Its subcellular location is the membrane. This is an uncharacterized protein from Bacillus subtilis (strain 168).